The chain runs to 71 residues: Protein translocase subunit SecE (71 aa).

A helical transmembrane segment spans residues 43-63; the sequence is VAGAGILAVGAIGFIIYVLLT.

Belongs to the SecE/SEC61-gamma family. As to quaternary structure, component of the Sec protein translocase complex. Heterotrimer consisting of SecY (alpha), SecG (beta) and SecE (gamma) subunits. The heterotrimers can form oligomers, although 1 heterotrimer is thought to be able to translocate proteins. Interacts with the ribosome. May interact with SecDF, and other proteins may be involved.

The protein localises to the cell membrane. In terms of biological role, essential subunit of the Sec protein translocation channel SecYEG. Clamps together the 2 halves of SecY. May contact the channel plug during translocation. The polypeptide is Protein translocase subunit SecE (Methanosarcina acetivorans (strain ATCC 35395 / DSM 2834 / JCM 12185 / C2A)).